Reading from the N-terminus, the 205-residue chain is Tic20 family protein Ycf60 (205 aa).

The next 5 membrane-spanning stretches (helical) occupy residues 5 to 25 (LFVNILFGTACIIIFGLVILI), 54 to 74 (AISCLIYFLPLLEGIAQFGIV), 102 to 122 (LIGFCIFITLYLIFVRGIIQI), 130 to 150 (IVQALLLYLLDSVIGTVLTSL), and 163 to 183 (LADTLLLITFMISIYAGTDAL).

It belongs to the Tic20 family.

It is found in the plastid. The protein resides in the chloroplast membrane. This chain is Tic20 family protein Ycf60 (ycf60), found in Cyanidium caldarium (Red alga).